The chain runs to 534 residues: Chaperonin GroEL 3 (534 aa).

ATP is bound by residues 31–34 (TLGP), G416, 479–481 (NAL), and D495.

This sequence belongs to the chaperonin (HSP60) family. Forms a cylinder of 14 subunits composed of two heptameric rings stacked back-to-back. Interacts with the co-chaperonin GroES.

The protein resides in the cytoplasm. The catalysed reaction is ATP + H2O + a folded polypeptide = ADP + phosphate + an unfolded polypeptide.. Its function is as follows. Together with its co-chaperonin GroES, plays an essential role in assisting protein folding. The GroEL-GroES system forms a nano-cage that allows encapsulation of the non-native substrate proteins and provides a physical environment optimized to promote and accelerate protein folding. This Protochlamydia amoebophila (strain UWE25) protein is Chaperonin GroEL 3.